We begin with the raw amino-acid sequence, 107 residues long: Thiosulfate sulfurtransferase GlpE (107 aa).

Positions 16-104 (KKRDIVIADV…WKAHHPTSDA (89 aa)) constitute a Rhodanese domain. The Cysteine persulfide intermediate role is filled by Cys64.

The protein belongs to the GlpE family.

Its subcellular location is the cytoplasm. It carries out the reaction thiosulfate + hydrogen cyanide = thiocyanate + sulfite + 2 H(+). The enzyme catalyses thiosulfate + [thioredoxin]-dithiol = [thioredoxin]-disulfide + hydrogen sulfide + sulfite + 2 H(+). Its function is as follows. Transferase that catalyzes the transfer of sulfur from thiosulfate to thiophilic acceptors such as cyanide or dithiols. May function in a CysM-independent thiosulfate assimilation pathway by catalyzing the conversion of thiosulfate to sulfite, which can then be used for L-cysteine biosynthesis. The protein is Thiosulfate sulfurtransferase GlpE of Coxiella burnetii (strain CbuK_Q154) (Coxiella burnetii (strain Q154)).